A 191-amino-acid chain; its full sequence is Xanthine phosphoribosyltransferase (191 aa).

The xanthine site is built by leucine 20 and asparagine 27. 128–132 (ANGQA) is a binding site for 5-phospho-alpha-D-ribose 1-diphosphate. Residue lysine 156 participates in xanthine binding.

It belongs to the purine/pyrimidine phosphoribosyltransferase family. Xpt subfamily. Homodimer.

Its subcellular location is the cytoplasm. The enzyme catalyses XMP + diphosphate = xanthine + 5-phospho-alpha-D-ribose 1-diphosphate. It functions in the pathway purine metabolism; XMP biosynthesis via salvage pathway; XMP from xanthine: step 1/1. Its function is as follows. Converts the preformed base xanthine, a product of nucleic acid breakdown, to xanthosine 5'-monophosphate (XMP), so it can be reused for RNA or DNA synthesis. This chain is Xanthine phosphoribosyltransferase, found in Limosilactobacillus reuteri (strain DSM 20016) (Lactobacillus reuteri).